Reading from the N-terminus, the 422-residue chain is tRNA hydroxylation protein P (422 aa).

The N-terminal stretch at 1 to 58 (MNQVELLSPAGNLKKLKIALNYGADAVYGGVSHFSLRNRAGKEFTLETFKEGIDYAHA) is a signal peptide.

The protein belongs to the peptidase U32 family.

In terms of biological role, involved in prephenate-dependent formation of 5-hydroxyuridine (ho5U) modification at position 34 in tRNAs, the first step in 5-carboxymethoxyuridine (cmo5U) biosynthesis. This Helicobacter pylori (strain ATCC 700392 / 26695) (Campylobacter pylori) protein is tRNA hydroxylation protein P.